We begin with the raw amino-acid sequence, 214 residues long: Large ribosomal subunit protein eL14 (214 aa).

N6-acetyllysine is present on lysine 79. N6-acetyllysine; alternate is present on lysine 85. Lysine 85 is subject to N6-succinyllysine; alternate. A Glycyl lysine isopeptide (Lys-Gly) (interchain with G-Cter in SUMO2) cross-link involves residue lysine 124. At serine 139 the chain carries Phosphoserine. Positions 161-214 are disordered; the sequence is PAKKITTEGKKAPAQKAPAQKAAGQKAAPPPKTQKGQKAPSQKAPAPKASGKKA. The stretch at 170–174 is one 1-1; approximate repeat; that stretch reads KKAPA. The 4 X 5 AA tandem repeats of Q-K-A-[APS]-X stretch occupies residues 170 to 189; sequence KKAPAQKAPAQKAAGQKAAP. Residues 172-214 show a composition bias toward low complexity; the sequence is APAQKAPAQKAAGQKAAPPPKTQKGQKAPSQKAPAPKASGKKA. 5 tandem repeats follow at residues 175–179, 180–184, 185–189, 192–194, and 195–197. The tract at residues 192–197 is 2 X 3 AA tandem repeats of K-G-Q; sequence KTQKGQ. The residue at position 203 (lysine 203) is an N6-succinyllysine.

The protein belongs to the eukaryotic ribosomal protein eL14 family. Component of the large ribosomal subunit.

It is found in the cytoplasm. In terms of biological role, component of the large ribosomal subunit. The ribosome is a large ribonucleoprotein complex responsible for the synthesis of proteins in the cell. The protein is Large ribosomal subunit protein eL14 (RPL14) of Bos taurus (Bovine).